A 339-amino-acid chain; its full sequence is Putative phosphate acyltransferase (339 aa).

It belongs to the PlsX family. As to quaternary structure, homodimer. Probably interacts with PlsY.

Its subcellular location is the cytoplasm. It catalyses the reaction a fatty acyl-[ACP] + phosphate = an acyl phosphate + holo-[ACP]. It functions in the pathway lipid metabolism; phospholipid metabolism. Catalyzes the reversible formation of acyl-phosphate (acyl-PO(4)) from acyl-[acyl-carrier-protein] (acyl-ACP). This enzyme utilizes acyl-ACP as fatty acyl donor, but not acyl-CoA. This Clostridium perfringens (strain 13 / Type A) protein is Putative phosphate acyltransferase.